The chain runs to 1091 residues: Rho GTPase-activating protein 7 (1091 aa).

Residues 11–78 (LTQIEAKEAC…LNKCAVMKLE (68 aa)) form the SAM domain. A phosphoserine mark is found at Ser86, Ser89, and Ser320. The tract at residues 273-447 (QLNCVEISAL…RLSIYDNVPG (175 aa)) is focal adhesion-targeting (FAT). Disordered regions lie at residues 292-327 (VRKR…RTRS), 382-439 (PKAL…SSRL), and 491-553 (SDEG…GVGA). Composition is skewed to low complexity over residues 297–323 (VSNS…SPVT) and 386–400 (SNGS…SSVN). Basic and acidic residues predominate over residues 414–425 (LRRENSSDSPKE). Residues 499 to 511 (ALDSVSPCPSSPK) are compositionally biased toward polar residues. A compositionally biased stretch (basic and acidic residues) spans 513–523 (IHLDVDNDRAT). A compositionally biased stretch (polar residues) spans 526–535 (DLDSTGNSLN). Positions 614–636 (KHGFSWAVPKFMKRIKVPDYKDR) are polybasic cluster (PBR). Residues 641-847 (VPLTVNVQRT…HMIAECKKLF (207 aa)) form the Rho-GAP domain. Residues 877–1084 (RNDESADYQH…RDSFSNQNTE (208 aa)) form the START domain.

Interacts with EF1A1, facilitates EF1A1 distribution to the membrane periphery and ruffles upon growth factor stimulation and suppresses cell migration. Interacts with tensin TNS1 (via N-terminus); the interaction is decreased by phosphorylation of TNS1. Interacts with TNS3 and PTEN; in resting cells, interacts with TNS3 (via C2 tensin-type domain) but, following growth factor stimulation, TNS3 and PTEN are phosphorylated which leads to weakened interaction with TNS3 and enhanced interaction with PTEN. Interacts (via C-terminus) with tensin TNS4 (via SH2 domain); the interaction is independent of tyrosine phosphorylation of DLC1.

The protein localises to the cytoplasm. Its subcellular location is the cell junction. It is found in the focal adhesion. It localises to the membrane. Functions as a GTPase-activating protein for the small GTPases RHOA, RHOB, RHOC and CDC42, terminating their downstream signaling. This induces morphological changes and detachment through cytoskeletal reorganization, playing a critical role in biological processes such as cell migration and proliferation. Also functions in vivo as an activator of the phospholipase PLCD1. Active DLC1 increases cell migration velocity but reduces directionality. Required for growth factor-induced epithelial cell migration; in resting cells, interacts with TNS3 while PTEN interacts with the p85 regulatory subunit of the PI3K kinase complex but growth factor stimulation induces phosphorylation of TNS3 and PTEN, causing them to change their binding preference so that PTEN interacts with DLC1 and TNS3 interacts with p85. The PTEN-DLC1 complex translocates to the posterior of migrating cells to activate RHOA while the TNS3-p85 complex translocates to the leading edge of migrating cells to promote RAC1 activation. This is Rho GTPase-activating protein 7 (DLC1) from Canis lupus familiaris (Dog).